Reading from the N-terminus, the 475-residue chain is Glutamate--tRNA ligase 2 (475 aa).

Positions 9–19 match the 'HIGH' region motif; the sequence is PSPTGFLHIGS. A 'KMSKS' region motif is present at residues 238–242; sequence KLSKR. ATP is bound at residue lysine 241.

It belongs to the class-I aminoacyl-tRNA synthetase family. Glutamate--tRNA ligase type 1 subfamily. Monomer.

It is found in the cytoplasm. It carries out the reaction tRNA(Glu) + L-glutamate + ATP = L-glutamyl-tRNA(Glu) + AMP + diphosphate. Its function is as follows. Catalyzes the attachment of glutamate to tRNA(Glu) in a two-step reaction: glutamate is first activated by ATP to form Glu-AMP and then transferred to the acceptor end of tRNA(Glu). The chain is Glutamate--tRNA ligase 2 from Bartonella quintana (strain Toulouse) (Rochalimaea quintana).